Consider the following 123-residue polypeptide: Large ribosomal subunit protein mL52 (123 aa).

A mitochondrion-targeting transit peptide spans 1 to 23 (MAALGTVLFTGVRRLHCSVAAWA). Basic and acidic residues predominate over residues 99–109 (QEEQRKQENAL). Residues 99 to 123 (QEEQRKQENALKPKGASLKSPLPSQ) are disordered.

Belongs to the mitochondrion-specific ribosomal protein mL52 family. Component of the mitochondrial large ribosomal subunit (mt-LSU). Mature mammalian 55S mitochondrial ribosomes consist of a small (28S) and a large (39S) subunit. The 28S small subunit contains a 12S ribosomal RNA (12S mt-rRNA) and 30 different proteins. The 39S large subunit contains a 16S rRNA (16S mt-rRNA), a copy of mitochondrial valine transfer RNA (mt-tRNA(Val)), which plays an integral structural role, and 52 different proteins. mL52 connects the central protuberance to the body of the ribosome.

Its subcellular location is the mitochondrion. The polypeptide is Large ribosomal subunit protein mL52 (MRPL52) (Homo sapiens (Human)).